A 302-amino-acid polypeptide reads, in one-letter code: N-acetylmuramic acid 6-phosphate etherase (302 aa).

Residues Ile-58–Lys-221 form the SIS domain. Catalysis depends on Glu-86, which acts as the Proton donor. Glu-117 is a catalytic residue.

It belongs to the GCKR-like family. MurNAc-6-P etherase subfamily. Homodimer.

It catalyses the reaction N-acetyl-D-muramate 6-phosphate + H2O = N-acetyl-D-glucosamine 6-phosphate + (R)-lactate. Its pathway is amino-sugar metabolism; N-acetylmuramate degradation. Its function is as follows. Specifically catalyzes the cleavage of the D-lactyl ether substituent of MurNAc 6-phosphate, producing GlcNAc 6-phosphate and D-lactate. This Clostridium botulinum (strain Okra / Type B1) protein is N-acetylmuramic acid 6-phosphate etherase.